The following is a 303-amino-acid chain: Phosphoglycerate mutase 3 (303 aa).

Residues 13-20, 26-27, arginine 70, 120-123, lysine 131, and 147-148 contribute to the substrate site; these read RHGQSELN, CG, ERHY, and RR. The Tele-phosphohistidine intermediate role is filled by histidine 14. Catalysis depends on glutamate 120, which acts as the Proton donor/acceptor. The interval 168–198 is disordered; it reads NDQGSSTGYDFKEPNRHLKYGPEEKANERLP. Residues 177 to 198 show a composition bias toward basic and acidic residues; that stretch reads DFKEPNRHLKYGPEEKANERLP. 236 to 237 is a substrate binding site; sequence GS.

It belongs to the phosphoglycerate mutase family. BPG-dependent PGAM subfamily.

The enzyme catalyses (2R)-2-phosphoglycerate = (2R)-3-phosphoglycerate. It participates in carbohydrate degradation; glycolysis; pyruvate from D-glyceraldehyde 3-phosphate: step 3/5. Functionally, could be non-functional. The chain is Phosphoglycerate mutase 3 (GPM3) from Saccharomyces cerevisiae (strain ATCC 204508 / S288c) (Baker's yeast).